The sequence spans 253 residues: Solute carrier family 66 member 2 (253 aa).

A run of 6 helical transmembrane segments spans residues 7–27 (GWLL…AMVF), 49–69 (FSTY…LFWF), 72–92 (HFES…LLML), 125–145 (FADY…ITYL), 150–170 (ALFV…LGVP), and 214–234 (VCGL…YVFT). Residues 14–80 (HQLVSWGAAG…RHFESPLLWQ (67 aa)) form the PQ-loop 1 domain. A PQ-loop 2 domain is found at 160–215 (AVLTEAMLGVPQLYRNHRHQSTEGMSIKMVLMWTSGDTFKTAYFLLNGAPLQFSVC).

The protein localises to the membrane. In Bos taurus (Bovine), this protein is Solute carrier family 66 member 2 (SLC66A2).